We begin with the raw amino-acid sequence, 249 residues long: Cytochrome c oxidase subunit 2 (249 aa).

Positions 1–13 are cleaved as a signal peptide; it reads MLNLFQIMNMINN. The Mitochondrial intermembrane segment spans residues 14–40; the sequence is DVPTPYGFYFQDSATPNQEGILELHDN. Residues 41-62 traverse the membrane as a helical segment; it reads IMFYLVVILGLVSWMLFTIVRT. Over 63–80 the chain is Mitochondrial matrix; that stretch reads YSRNPMAYKYIKHGQTIE. The helical transmembrane segment at 81 to 105 threads the bilayer; sequence IIWKIFPAVILLTIAFPSFILLYLC. The Mitochondrial intermembrane portion of the chain corresponds to 106 to 249; it reads DEVISPAMTI…PKFLEWLNEQ (144 aa). The Cu cation site is built by His-184, Cys-219, Glu-221, Cys-223, His-227, and Met-230. Glu-221 lines the Mg(2+) pocket.

The protein belongs to the cytochrome c oxidase subunit 2 family. In terms of assembly, component of the cytochrome c oxidase (complex IV, CIV), a multisubunit enzyme composed of a catalytic core of 3 subunits and several supernumerary subunits. The complex exists as a monomer or a dimer and forms supercomplexes (SCs) in the inner mitochondrial membrane with ubiquinol-cytochrome c oxidoreductase (cytochrome b-c1 complex, complex III, CIII). Cu cation serves as cofactor. Post-translationally, the signal sequence of COX2 is processed by IMP1.

It localises to the mitochondrion inner membrane. The enzyme catalyses 4 Fe(II)-[cytochrome c] + O2 + 8 H(+)(in) = 4 Fe(III)-[cytochrome c] + 2 H2O + 4 H(+)(out). In terms of biological role, component of the cytochrome c oxidase, the last enzyme in the mitochondrial electron transport chain which drives oxidative phosphorylation. The respiratory chain contains 3 multisubunit complexes succinate dehydrogenase (complex II, CII), ubiquinol-cytochrome c oxidoreductase (cytochrome b-c1 complex, complex III, CIII) and cytochrome c oxidase (complex IV, CIV), that cooperate to transfer electrons derived from NADH and succinate to molecular oxygen, creating an electrochemical gradient over the inner membrane that drives transmembrane transport and the ATP synthase. Cytochrome c oxidase is the component of the respiratory chain that catalyzes the reduction of oxygen to water. Electrons originating from reduced cytochrome c in the intermembrane space (IMS) are transferred via the dinuclear copper A center (CU(A)) of subunit 2 and heme A of subunit 1 to the active site in subunit 1, a binuclear center (BNC) formed by heme A3 and copper B (CU(B)). The BNC reduces molecular oxygen to 2 water molecules using 4 electrons from cytochrome c in the IMS and 4 protons from the mitochondrial matrix. This Maudiozyma exigua (Yeast) protein is Cytochrome c oxidase subunit 2 (COX2).